Here is a 273-residue protein sequence, read N- to C-terminus: Octanoyltransferase LipM (273 aa).

The 209-residue stretch at 32–240 (GEIPPTLRFY…GFSEILNIEL (209 aa)) folds into the BPL/LPL catalytic domain. Cysteine 142 serves as the catalytic Acyl-thioester intermediate.

It belongs to the octanoyltransferase LipM family. As to quaternary structure, monomer.

It carries out the reaction octanoyl-[ACP] + L-lysyl-[protein] = N(6)-octanoyl-L-lysyl-[protein] + holo-[ACP] + H(+). It participates in protein modification; protein lipoylation via endogenous pathway; protein N(6)-(lipoyl)lysine from octanoyl-[acyl-carrier-protein]. Functionally, catalyzes the transfer of endogenously produced octanoic acid from octanoyl-acyl-carrier-protein onto the lipoyl domain of GcvH, an intermediate carrier during protein lipoylation. The chain is Octanoyltransferase LipM from Oceanobacillus iheyensis (strain DSM 14371 / CIP 107618 / JCM 11309 / KCTC 3954 / HTE831).